The sequence spans 278 residues: Splicing factor YJU2 (278 aa).

Positions 51, 54, 88, and 91 each coordinate Zn(2+). The tract at residues 228 to 278 (HRQRTNKPGNNNDEKRTPLFNPTSTKGKIQKKSSVRTNPLGIVIKRGKSLK) is disordered. 2 consecutive short sequence motifs (nuclear localization signal) follow at residues 242 to 258 (KRTP…KIQK) and 260 to 278 (SSVR…KSLK).

The protein belongs to the CWC16 family. YJU2 subfamily. As to quaternary structure, component of the spliceosome. Present in the activated B complex, the catalytically activated B* complex which catalyzes the branching, the catalytic step 1 C complex catalyzing the exon ligation, and the postcatalytic P complex containing the ligated exons (mRNA) and the excised lariat intron. Interacts (via C-terminus) with CLF1. Interacts (via N-terminus) with SYF1. Interacts with U2 snRNA; this interaction is direct. Identified in the CWC complex (or CEF1-associated complex), a spliceosome sub-complex reminiscent of a late-stage spliceosome composed of the U2, U5 and U6 snRNAs and at least BUD13, BUD31, BRR2, CDC40, CEF1, CLF1, CUS1, CWC2, CWC15, CWC21, CWC22, CWC23, CWC24, CWC25, CWC27, ECM2, HSH155, IST3, ISY1, LEA1, MSL1, NTC20, PRP8, PRP9, PRP11, PRP19, PRP21, PRP22, PRP45, PRP46, SLU7, SMB1, SMD1, SMD2, SMD3, SMX2, SMX3, SNT309, SNU114, SPP2, SYF1, SYF2, RSE1 and YJU2.

It localises to the nucleus. Functionally, part of the spliceosome which catalyzes two sequential transesterification reactions, first the excision of the non-coding intron from pre-mRNA and then the ligation of the coding exons to form the mature mRNA. Plays a role (via N-terminus) in stabilizing the structure of the spliceosome catalytic core and docking of the branch helix into the active site, producing 5'-exon and lariat intron-3'-intermediates. Further stabilizes spliceosome conformation for 3'-splice site docking (via C-terminus) promoting exon ligation. The sequence is that of Splicing factor YJU2 from Saccharomyces cerevisiae (strain ATCC 204508 / S288c) (Baker's yeast).